The primary structure comprises 1095 residues: DNA polymerase delta catalytic subunit (1095 aa).

A compositionally biased stretch (basic residues) spans 1–11 (MNRSGISKKRP). The tract at residues 1–37 (MNRSGISKKRPPPSNTPPPAGKHRATGDSTPSPAIGT) is disordered. Zn(2+)-binding residues include Cys1007, Cys1010, Cys1020, and Cys1023. The CysA-type zinc finger occupies 1007-1023 (CVGCKVPISNGTLCASC). 4 residues coordinate [4Fe-4S] cluster: Cys1052, Cys1055, Cys1065, and Cys1070. Positions 1052–1070 (CQECQGSLHQDVLCTSRDC) match the CysB motif motif.

It belongs to the DNA polymerase type-B family. In terms of assembly, heterodimer with subunits of 125 kDa and 50 kDa. The 125 kDa subunit contains the polymerase active site and most likely the active site for the 3'-5' exonuclease activity. [4Fe-4S] cluster serves as cofactor.

It is found in the nucleus. The catalysed reaction is DNA(n) + a 2'-deoxyribonucleoside 5'-triphosphate = DNA(n+1) + diphosphate. Functionally, this polymerase possesses two enzymatic activities: DNA synthesis (polymerase) and an exonucleolytic activity that degrades single-stranded DNA in the 3'- to 5'-direction. In Arabidopsis thaliana (Mouse-ear cress), this protein is DNA polymerase delta catalytic subunit (POLD1).